The following is a 246-amino-acid chain: Breast cancer metastasis-suppressor 1 (246 aa).

The interval 1–57 (MPVQPPSKDTEEMEAEGDSAAEMNGEEEESEEERSGSQTESEEESSEMDDEDYERRR) is disordered. Composition is skewed to acidic residues over residues 11 to 32 (EEMEAEGDSAAEMNGEEEESEE) and 40 to 52 (ESEEESSEMDDED). Positions 51-98 (EDYERRRSECVSEMLDLEKQFSELKEKLFRERLSQLRLRLEEVGAERA) form a coiled coil. Glycyl lysine isopeptide (Lys-Gly) (interchain with G-Cter in SUMO2) cross-links involve residues Lys184 and Lys242.

Belongs to the BRMS1 family. As to quaternary structure, homohexamer (Potential). Interacts with SNX6, HDAC1 and RELA. Interacts with ARID4A. Identified in mSin3A corepressor complexes together with SIN3A, SIN3B, RBBP4, RBBP7, SAP30, SUDS3, ARID4A, HDAC1 and HDAC2. Interacts with SPOP; this recruits the protein to a ubiquitin ligase complex containing SPOP and CUL3. In terms of processing, ubiquitinated by a cullin-RING-based BCR (BTB-CUL3-RBX1) E3 ubiquitin-protein ligase complex containing SPOP, leading to proteasomal degradation. In terms of tissue distribution, expression levels are higher in term placentas than in early placentas. Low levels of expression observed in normal pregnancies and in molar pregnancies.

It is found in the nucleus. The protein localises to the cytoplasm. Transcriptional repressor. Down-regulates transcription activation by NF-kappa-B by promoting the deacetylation of RELA at 'Lys-310'. Promotes HDAC1 binding to promoter regions. Down-regulates expression of anti-apoptotic genes that are controlled by NF-kappa-B. Promotes apoptosis in cells that have inadequate adherence to a substrate, a process called anoikis, and may thereby inhibit metastasis. May be a mediator of metastasis suppression in breast carcinoma. The sequence is that of Breast cancer metastasis-suppressor 1 (BRMS1) from Homo sapiens (Human).